The sequence spans 546 residues: uncharacterized protein (546 aa).

10 helical membrane-spanning segments follow: residues 106–126 (WWIV…SSVY), 145–165 (TLGS…FAPL), 172–192 (FIIY…GGCA), 231–251 (YVLP…PIIG), 263–283 (WTFW…FIFF), 332–352 (LIFT…VYII), 375–395 (GLSF…TPFI), 416–436 (LYPL…FAWT), 444–464 (WIVP…VFFV), and 510–530 (WATS…FIFY).

This sequence belongs to the major facilitator superfamily. CAR1 family.

It is found in the endoplasmic reticulum membrane. This is an uncharacterized protein from Schizosaccharomyces pombe (strain 972 / ATCC 24843) (Fission yeast).